We begin with the raw amino-acid sequence, 217 residues long: MSAAKPKVAKKARVAPAHPPSSQMVVAAVTALKERGGSSTQAIKKYIAANYTVDMTKQGPFIRRALVKGVASGALVQTKGKGASGSFKLGKKKEGKSDAQKARIAAKKAKLAAKKKEQREKKALKTKARKEKVAAKKAAKKATKKTKKVKKPAAKKAKKPAAKKPAAKKPAAKKAKKPAKKVAKPAKKAAAKPAKKAAKPAKKAAKPAKKAAKPAKK.

Disordered regions lie at residues 1–21 and 80–217; these read MSAA…HPPS and GKGA…PAKK. Residues 17–91 enclose the H15 domain; that stretch reads AHPPSSQMVV…GASGSFKLGK (75 aa). Basic residues predominate over residues 104 to 113; that stretch reads IAAKKAKLAA. Over residues 114-123 the composition is skewed to basic and acidic residues; that stretch reads KKKEQREKKA. A compositionally biased stretch (basic residues) spans 124–217; the sequence is LKTKARKEKV…AKKAAKPAKK (94 aa).

It belongs to the histone H1/H5 family.

The protein localises to the nucleus. It localises to the chromosome. In terms of biological role, histones H1 are necessary for the condensation of nucleosome chains into higher-order structures. This Strongylocentrotus purpuratus (Purple sea urchin) protein is Histone H1-gamma, late.